The primary structure comprises 559 residues: MEKKENGLDGKQSGRVINGPTNPMVTPLLNDLYQFTMAYAYWKAGKQSERSVFDLYFRKNPFGGEYTIFAGLEECIKFLANFNLTDEEIDFVRDSLPGCEEAFCDYLRGLDCSDIEVYAISEGSVVFPKVPLLRIEGPVAVVQLLETPFLNLINYASLVATNAARHRFVAGKSKLLLEFGARRAQGPDGAISASKYCYLGGFDATSNVAAGKLFGIPLRGTHSHAFVSSFMSLDEIVDKVLRSSDGKSTCKDFICLVQTCLTKIQNSSSLQGIFSETNQSELAAFISYALAFPNSFLALVDTYDVMKSGIPNFCAVALALNELGYKAVGIRLDSGDLAYLSTEVRKFFCAIERDLKVPDFGKMIVTASNDLNEETVDALNKQGHEVDAFGIGTNLVTCYAQAALGCVFKLVEINNQPRIKLSEDVTKVSIPCKKRTYRLFGKEGYPLVDIMTGENEPPPKVGERLLCRHPFNESKRAYVVPQRVEELLKCYWRGNADEAREELEPLKELRNRCIKQLENMRPDHMRRLNPTPYKVSVSAKLYDFIHFLWLNEAPVGELH.

Positions 33 and 221 each coordinate nicotinate. Residue His-224 is modified to Phosphohistidine. A nicotinate-binding site is contributed by Arg-331. Thr-393 provides a ligand contact to 5-phospho-alpha-D-ribose 1-diphosphate.

Belongs to the NAPRTase family. Mg(2+) is required as a cofactor. Mn(2+) serves as cofactor. Transiently phosphorylated on a His residue during the reaction cycle. Phosphorylation strongly increases the affinity for substrates and increases the rate of nicotinate D-ribonucleotide production. Dephosphorylation regenerates the low-affinity form of the enzyme, leading to product release.

It carries out the reaction nicotinate + 5-phospho-alpha-D-ribose 1-diphosphate + ATP + H2O = nicotinate beta-D-ribonucleotide + ADP + phosphate + diphosphate. It participates in cofactor biosynthesis; NAD(+) biosynthesis; nicotinate D-ribonucleotide from nicotinate: step 1/1. Its function is as follows. Catalyzes the first step in the biosynthesis of NAD from nicotinic acid, the ATP-dependent synthesis of beta-nicotinate D-ribonucleotide from nicotinate and 5-phospho-D-ribose 1-phosphate. Helps prevent cellular oxidative stress via its role in NAD biosynthesis. In Arabidopsis thaliana (Mouse-ear cress), this protein is Nicotinate phosphoribosyltransferase 1.